Here is a 379-residue protein sequence, read N- to C-terminus: GTP cyclohydrolase 1 type 2 homolog (379 aa).

The a divalent metal cation site is built by histidine 64, histidine 65, aspartate 103, histidine 333, and glutamate 337.

The protein belongs to the GTP cyclohydrolase I type 2/NIF3 family. Homohexamer.

The chain is GTP cyclohydrolase 1 type 2 homolog from Mycobacterium bovis (strain ATCC BAA-935 / AF2122/97).